A 482-amino-acid chain; its full sequence is Ribosomal protein S6 kinase beta-2 (482 aa).

The tract at residues 1–26 (MAAVFDLDLETEEGSEGEGEPELSPA) is disordered. A compositionally biased stretch (acidic residues) spans 7-21 (LDLETEEGSEGEGEP). Residue S15 is modified to Phosphoserine. Positions 67 to 328 (FELLRVLGKG…AADVQRHPFF (262 aa)) constitute a Protein kinase domain. ATP-binding positions include 73–81 (LGKGGYGKV) and K99. D194 acts as the Proton acceptor in catalysis. One can recognise an AGC-kinase C-terminal domain in the interval 329 to 399 (RHMNWDDLLA…VAPSVLDSIK (71 aa)). The disordered stretch occupies residues 407–482 (KLRSPRRLNS…SKRGRGRPGR (76 aa)). Phosphoserine is present on residues S417 and S423. Pro residues predominate over residues 437 to 466 (PSLPEPTELPLPPLLPPPPPSTTAPLPIRP). The short motif at 471–477 (KKSKRGR) is the Nuclear localization signal element. The segment covering 471-482 (KKSKRGRGRPGR) has biased composition (basic residues). At S473 the chain carries Phosphoserine; by PKC.

It belongs to the protein kinase superfamily. AGC Ser/Thr protein kinase family. S6 kinase subfamily. Post-translationally, phosphorylated and activated by MTOR. Phosphorylation by PKC within the NLS in response to mitogenic stimuli causes cytoplasmic retention.

The protein localises to the cytoplasm. The protein resides in the nucleus. The catalysed reaction is L-seryl-[protein] + ATP = O-phospho-L-seryl-[protein] + ADP + H(+). It carries out the reaction L-threonyl-[protein] + ATP = O-phospho-L-threonyl-[protein] + ADP + H(+). Phosphorylates specifically ribosomal protein S6. Seems to act downstream of mTOR signaling in response to growth factors and nutrients to promote cell proliferation, cell growth and cell cycle progression in an alternative pathway regulated by MEAK7. The chain is Ribosomal protein S6 kinase beta-2 (RPS6KB2) from Homo sapiens (Human).